The primary structure comprises 243 residues: 1-(5-phosphoribosyl)-5-[(5-phosphoribosylamino)methylideneamino] imidazole-4-carboxamide isomerase (243 aa).

Asp8 serves as the catalytic Proton acceptor. The active-site Proton donor is Asp130.

Belongs to the HisA/HisF family.

It localises to the cytoplasm. It carries out the reaction 1-(5-phospho-beta-D-ribosyl)-5-[(5-phospho-beta-D-ribosylamino)methylideneamino]imidazole-4-carboxamide = 5-[(5-phospho-1-deoxy-D-ribulos-1-ylimino)methylamino]-1-(5-phospho-beta-D-ribosyl)imidazole-4-carboxamide. Its pathway is amino-acid biosynthesis; L-histidine biosynthesis; L-histidine from 5-phospho-alpha-D-ribose 1-diphosphate: step 4/9. The protein is 1-(5-phosphoribosyl)-5-[(5-phosphoribosylamino)methylideneamino] imidazole-4-carboxamide isomerase of Saccharophagus degradans (strain 2-40 / ATCC 43961 / DSM 17024).